The chain runs to 181 residues: Large ribosomal subunit protein uL5 (181 aa).

The protein belongs to the universal ribosomal protein uL5 family. As to quaternary structure, part of the 50S ribosomal subunit; part of the 5S rRNA/L5/L18/L25 subcomplex. Contacts the 5S rRNA and the P site tRNA. Forms a bridge to the 30S subunit in the 70S ribosome.

This is one of the proteins that bind and probably mediate the attachment of the 5S RNA into the large ribosomal subunit, where it forms part of the central protuberance. In the 70S ribosome it contacts protein S13 of the 30S subunit (bridge B1b), connecting the 2 subunits; this bridge is implicated in subunit movement. Contacts the P site tRNA; the 5S rRNA and some of its associated proteins might help stabilize positioning of ribosome-bound tRNAs. In Campylobacter hominis (strain ATCC BAA-381 / DSM 21671 / CCUG 45161 / LMG 19568 / NCTC 13146 / CH001A), this protein is Large ribosomal subunit protein uL5.